The following is a 336-amino-acid chain: HTH-type transcriptional regulator AscG (336 aa).

One can recognise an HTH lacI-type domain in the interval 2-56 (TTMLEVAKRAGVSKATVSRVLSGNGYVSQETKDRVFQAVEESGYRPNLLARNLSA). The H-T-H motif DNA-binding region spans 4-23 (MLEVAKRAGVSKATVSRVLS).

Repressor of the asc operon. The cryptic operon is activated by the insertion of IS186 into the ascG gene. The protein is HTH-type transcriptional regulator AscG (ascG) of Escherichia coli (strain K12).